A 314-amino-acid chain; its full sequence is Torsin-2A (314 aa).

An N-terminal signal peptide occupies residues 1–19 (MAVRWWIIPMLLLVPGSSG). 86–93 (GWSGTGKT) lines the ATP pocket. N-linked (GlcNAc...) asparagine glycans are attached at residues Asn142 and Asn283.

It belongs to the ClpA/ClpB family. Torsin subfamily. Homohexamer.

It is found in the endoplasmic reticulum lumen. In Xenopus laevis (African clawed frog), this protein is Torsin-2A (tor2a).